Consider the following 369-residue polypeptide: Transmembrane protein 144 homolog A (369 aa).

Helical transmembrane passes span V6–V26, L35–I55, P63–I83, L85–F105, D122–I142, V221–M241, I256–A276, T288–I308, G318–F338, and L347–S367.

Belongs to the TMEM144 family.

Its subcellular location is the membrane. The sequence is that of Transmembrane protein 144 homolog A (tmem144A) from Dictyostelium discoideum (Social amoeba).